We begin with the raw amino-acid sequence, 97 residues long: Putative septation protein SpoVG (97 aa).

The protein belongs to the SpoVG family.

Essential for sporulation. Interferes with or is a negative regulator of the pathway leading to asymmetric septation. The protein is Putative septation protein SpoVG of Bacillus velezensis (strain DSM 23117 / BGSC 10A6 / LMG 26770 / FZB42) (Bacillus amyloliquefaciens subsp. plantarum).